The chain runs to 45 residues: Caltrin-like protein 1 (45 aa).

Residues 8 to 45 (DSDRPNCSRYVQHLYMCTKELDPVCGTDGHTYGNRSIF) form the Kazal-like domain. 2 N-linked (GlcNAc...) asparagine glycosylation sites follow: N13 and N41.

Post-translationally, glycosylated.

It is found in the secreted. Functionally, inhibits calcium transport into spermatozoa. The polypeptide is Caltrin-like protein 1 (Cavia porcellus (Guinea pig)).